Reading from the N-terminus, the 462-residue chain is Proline--tRNA ligase (462 aa).

It belongs to the class-II aminoacyl-tRNA synthetase family. ProS type 3 subfamily. Homodimer.

It localises to the cytoplasm. It carries out the reaction tRNA(Pro) + L-proline + ATP = L-prolyl-tRNA(Pro) + AMP + diphosphate. Catalyzes the attachment of proline to tRNA(Pro) in a two-step reaction: proline is first activated by ATP to form Pro-AMP and then transferred to the acceptor end of tRNA(Pro). This is Proline--tRNA ligase from Thermoplasma volcanium (strain ATCC 51530 / DSM 4299 / JCM 9571 / NBRC 15438 / GSS1).